Consider the following 1554-residue polypeptide: Lysine-specific demethylase 5C (1554 aa).

The region spanning 14–55 (CPVFEPSWAEFRDPLGYIAKIRPIAEKSGICKIRPPADWQPP) is the JmjN domain. Positions 79–169 (TRVKLNYLDQ…IVYPYEMYQS (91 aa)) constitute an ARID domain. Residues 197–207 (LRQSVQPSKFN) are compositionally biased toward polar residues. Residues 197–227 (LRQSVQPSKFNSYGRRAKRLQPDPEPTEEDI) form a disordered region. Residues lysine 205, lysine 229, lysine 244, and lysine 274 each participate in a glycyl lysine isopeptide (Lys-Gly) (interchain with G-Cter in SUMO2) cross-link. The tract at residues 284 to 303 (ESTSPKTFLEGKEELSHSPE) is disordered. Phosphoserine is present on serine 287. Lysine 295 participates in a covalent cross-link: Glycyl lysine isopeptide (Lys-Gly) (interchain with G-Cter in SUMO2). 2 positions are modified to phosphoserine: serine 301 and serine 317. The segment at 326–372 (VCRMCSRGDEDDKLLLCDGCDDNYHIFCLLPPLPEIPKGVWRCPKCV) adopts a PHD-type 1 zinc-finger fold. The JmjC domain occupies 468 to 634 (EYATSGWNLN…AGRQCIEHYR (167 aa)). Positions 514, 517, and 602 each coordinate Fe cation. 2 positions are modified to phosphoserine: serine 893 and serine 897. Lysine 1127 is covalently cross-linked (Glycyl lysine isopeptide (Lys-Gly) (interchain with G-Cter in SUMO2)). The segment at 1187–1248 (ICVCGQVPAG…DTKFLCPLCM (62 aa)) adopts a PHD-type 2 zinc-finger fold. 2 disordered regions span residues 1319–1364 (SKPE…EGSG) and 1437–1535 (AERH…APFS). Residue serine 1353 is modified to Phosphoserine. Over residues 1442–1457 (SRTRGRALERRRRRKV) the composition is skewed to basic residues. A compositionally biased stretch (basic and acidic residues) spans 1458 to 1475 (DRGGEPDDPAREELEPKR). The span at 1482-1497 (EAEEVQEEEELEEETG) shows a compositional bias: acidic residues.

It belongs to the JARID1 histone demethylase family. In terms of assembly, part of two distinct complexes, one containing E2F6, and the other containing REST. Interacts with ZMYND8. The cofactor is Fe(2+).

The protein localises to the nucleus. It carries out the reaction N(6),N(6),N(6)-trimethyl-L-lysyl(4)-[histone H3] + 3 2-oxoglutarate + 3 O2 = L-lysyl(4)-[histone H3] + 3 formaldehyde + 3 succinate + 3 CO2. Functionally, histone demethylase that specifically demethylates 'Lys-4' of histone H3, thereby playing a central role in histone code. Does not demethylate histone H3 'Lys-9', H3 'Lys-27', H3 'Lys-36', H3 'Lys-79' or H4 'Lys-20'. Demethylates trimethylated and dimethylated but not monomethylated H3 'Lys-4'. Participates in transcriptional repression of neuronal genes by recruiting histone deacetylases and REST at neuron-restrictive silencer elements. Represses the CLOCK-BMAL1 heterodimer-mediated transcriptional activation of the core clock component PER2. The protein is Lysine-specific demethylase 5C (Kdm5c) of Mus musculus (Mouse).